Here is a 219-residue protein sequence, read N- to C-terminus: Ribose-5-phosphate isomerase A (219 aa).

Residues 28–31 (SGST), 81–84 (DGAD), and 94–97 (KGGG) contribute to the substrate site. The Proton acceptor role is filled by E103. K121 is a substrate binding site.

The protein belongs to the ribose 5-phosphate isomerase family. In terms of assembly, homodimer.

The enzyme catalyses aldehydo-D-ribose 5-phosphate = D-ribulose 5-phosphate. Its pathway is carbohydrate degradation; pentose phosphate pathway; D-ribose 5-phosphate from D-ribulose 5-phosphate (non-oxidative stage): step 1/1. Its function is as follows. Catalyzes the reversible conversion of ribose-5-phosphate to ribulose 5-phosphate. This Haemophilus influenzae (strain 86-028NP) protein is Ribose-5-phosphate isomerase A.